A 34-amino-acid chain; its full sequence is DDCLGMFSSCDPDNDKCCEGRKCNRKDKWCKYVL.

3 disulfides stabilise this stretch: cysteine 3-cysteine 18, cysteine 10-cysteine 23, and cysteine 17-cysteine 30. Leucine 34 bears the Leucine amide mark.

It belongs to the neurotoxin 10 (Hwtx-1) family. 34 (Jztx-26) subfamily. As to expression, expressed by the venom gland.

It is found in the secreted. In terms of biological role, spider venom neurotoxin that blocks voltage-gated sodium channels Nav1.3/SCN3A and Nav1.8/SCN10A in human (IC(50)=2 uM and IC(50)=4 uM, respectively) and rat (IC(50)=2 uM and IC(50)=2.5 uM, respectively). The chain is Beta-theraphotoxin-Pmu1a from Pterinochilus murinus (Mombasa golden starburst baboon spider).